A 229-amino-acid polypeptide reads, in one-letter code: MATWMNINLQDANSSTMEQLTMFHDHTLMILTMITSIVTFIMVSMTTNTLINRYLLEGQTIEFIWTTIPAITLIFIALPSLHLLYLIDEINNPEMTLKVIGHQWYWSYEYSDFKNIEFDSYMKPTNELMNNEFRLLEVDNRVLLPMNKQIRILITAADVLHSWAIPSLGVKIDATPGRLNQGSIKINRPGILFGQCSEICGANHSFMPIVIESVPIKNFLKWINKSLSS.

Topologically, residues 1 to 26 are mitochondrial intermembrane; sequence MATWMNINLQDANSSTMEQLTMFHDH. The chain crosses the membrane as a helical span at residues 27–48; sequence TLMILTMITSIVTFIMVSMTTN. At 49-62 the chain is on the mitochondrial matrix side; it reads TLINRYLLEGQTIE. A helical membrane pass occupies residues 63–82; that stretch reads FIWTTIPAITLIFIALPSLH. At 83–229 the chain is on the mitochondrial intermembrane side; the sequence is LLYLIDEINN…LKWINKSLSS (147 aa). Cu cation is bound by residues histidine 161, cysteine 196, glutamate 198, cysteine 200, histidine 204, and methionine 207. Glutamate 198 is a Mg(2+) binding site.

It belongs to the cytochrome c oxidase subunit 2 family. Component of the cytochrome c oxidase (complex IV, CIV), a multisubunit enzyme composed of a catalytic core of 3 subunits and several supernumerary subunits. The complex exists as a monomer or a dimer and forms supercomplexes (SCs) in the inner mitochondrial membrane with ubiquinol-cytochrome c oxidoreductase (cytochrome b-c1 complex, complex III, CIII). Cu cation serves as cofactor.

It localises to the mitochondrion inner membrane. The enzyme catalyses 4 Fe(II)-[cytochrome c] + O2 + 8 H(+)(in) = 4 Fe(III)-[cytochrome c] + 2 H2O + 4 H(+)(out). Component of the cytochrome c oxidase, the last enzyme in the mitochondrial electron transport chain which drives oxidative phosphorylation. The respiratory chain contains 3 multisubunit complexes succinate dehydrogenase (complex II, CII), ubiquinol-cytochrome c oxidoreductase (cytochrome b-c1 complex, complex III, CIII) and cytochrome c oxidase (complex IV, CIV), that cooperate to transfer electrons derived from NADH and succinate to molecular oxygen, creating an electrochemical gradient over the inner membrane that drives transmembrane transport and the ATP synthase. Cytochrome c oxidase is the component of the respiratory chain that catalyzes the reduction of oxygen to water. Electrons originating from reduced cytochrome c in the intermembrane space (IMS) are transferred via the dinuclear copper A center (CU(A)) of subunit 2 and heme A of subunit 1 to the active site in subunit 1, a binuclear center (BNC) formed by heme A3 and copper B (CU(B)). The BNC reduces molecular oxygen to 2 water molecules using 4 electrons from cytochrome c in the IMS and 4 protons from the mitochondrial matrix. The chain is Cytochrome c oxidase subunit 2 (COII) from Oncopeltus fasciatus (Large milkweed bug).